The primary structure comprises 442 residues: 3-dehydroquinate synthase, chloroplastic (442 aa).

Residues 1–58 (MAANTISLSNVAASKNLNSFQSRAFIAPPTIFFPVASAKSKPGELSLSSTTLSRSRVR) constitute a chloroplast transit peptide. Position 59 is an N-acetylalanine (Ala-59). Residues Asn-119, 150–152 (DGE), Lys-155, 183–188 (GGVIGD), 208–209 (TT), Lys-221, Lys-230, and 248–251 (TLNT) each bind NAD(+). Glu-263 contributes to the a divalent metal cation binding site. An NAD(+)-binding site is contributed by Lys-305. A divalent metal cation contacts are provided by His-326 and His-343.

This sequence belongs to the sugar phosphate cyclases superfamily. Dehydroquinate synthase family. Homodimer. It depends on a divalent metal cation as a cofactor. NAD(+) serves as cofactor.

Its subcellular location is the plastid. It is found in the chloroplast. It catalyses the reaction 7-phospho-2-dehydro-3-deoxy-D-arabino-heptonate = 3-dehydroquinate + phosphate. Its pathway is metabolic intermediate biosynthesis; chorismate biosynthesis; chorismate from D-erythrose 4-phosphate and phosphoenolpyruvate: step 2/7. Its function is as follows. Catalyzes the second step in the shikimate pathway. The chain is 3-dehydroquinate synthase, chloroplastic (DHQS) from Arabidopsis thaliana (Mouse-ear cress).